Consider the following 166-residue polypeptide: MLSKNLLEALNDQMNHEYFAAHAYMAMAAYCDKESYEGFANFFIQQAKEERFHGQKIYNYINDRGAHAEFRAVSAPKIDFSSILETFKDSLSQEQEVTRRFYNLSEIARQDKDYATISFLNWFLDEQVEEESMFETHINYLTRIGDDSNALYLYEKELGARTFDEE.

The Ferritin-like diiron domain occupies 2 to 145; the sequence is LSKNLLEALN…THINYLTRIG (144 aa). Fe cation contacts are provided by E17, E50, H53, E94, and Q127.

It belongs to the ferritin family. Prokaryotic subfamily.

The protein resides in the cytoplasm. The catalysed reaction is 4 Fe(2+) + O2 + 6 H2O = 4 iron(III) oxide-hydroxide + 12 H(+). Its function is as follows. Iron-storage protein. The polypeptide is Bacterial non-heme ferritin (ftnA) (Staphylococcus aureus (strain USA300)).